The primary structure comprises 208 residues: Thymidylate kinase (208 aa).

Residue 10–17 participates in ATP binding; sequence GPDGSGKT.

It belongs to the thymidylate kinase family.

The catalysed reaction is dTMP + ATP = dTDP + ADP. Functionally, phosphorylation of dTMP to form dTDP in both de novo and salvage pathways of dTTP synthesis. The polypeptide is Thymidylate kinase (Listeria monocytogenes serotype 4b (strain CLIP80459)).